A 170-amino-acid polypeptide reads, in one-letter code: Peptide deformylase (170 aa).

Fe cation contacts are provided by Cys91 and His133. Glu134 is an active-site residue. His137 contributes to the Fe cation binding site.

The protein belongs to the polypeptide deformylase family. The cofactor is Fe(2+).

It carries out the reaction N-terminal N-formyl-L-methionyl-[peptide] + H2O = N-terminal L-methionyl-[peptide] + formate. Functionally, removes the formyl group from the N-terminal Met of newly synthesized proteins. Requires at least a dipeptide for an efficient rate of reaction. N-terminal L-methionine is a prerequisite for activity but the enzyme has broad specificity at other positions. In Aeromonas salmonicida (strain A449), this protein is Peptide deformylase.